Here is a 1303-residue protein sequence, read N- to C-terminus: Phosphoribosylformylglycinamidine synthase (1303 aa).

Residues 308–319 (GASTGSGGEIRD) and Ala679 contribute to the ATP site. Mg(2+) is bound by residues Glu719, Asn723, and Asp892. A disordered region spans residues 1003 to 1023 (LRDNPACADQEHEAKKDNSDP). Basic and acidic residues predominate over residues 1011–1021 (DQEHEAKKDNS). Residues 1050 to 1303 (MAILREQGVN…MFQNARKNIG (254 aa)) form the Glutamine amidotransferase type-1 domain. Cys1143 acts as the Nucleophile in catalysis. Catalysis depends on residues His1268 and Glu1270.

This sequence in the N-terminal section; belongs to the FGAMS family. As to quaternary structure, monomer.

The protein localises to the cytoplasm. It catalyses the reaction N(2)-formyl-N(1)-(5-phospho-beta-D-ribosyl)glycinamide + L-glutamine + ATP + H2O = 2-formamido-N(1)-(5-O-phospho-beta-D-ribosyl)acetamidine + L-glutamate + ADP + phosphate + H(+). Its pathway is purine metabolism; IMP biosynthesis via de novo pathway; 5-amino-1-(5-phospho-D-ribosyl)imidazole from N(2)-formyl-N(1)-(5-phospho-D-ribosyl)glycinamide: step 1/2. Its function is as follows. Phosphoribosylformylglycinamidine synthase involved in the purines biosynthetic pathway. Catalyzes the ATP-dependent conversion of formylglycinamide ribonucleotide (FGAR) and glutamine to yield formylglycinamidine ribonucleotide (FGAM) and glutamate. The polypeptide is Phosphoribosylformylglycinamidine synthase (Aliivibrio fischeri (strain ATCC 700601 / ES114) (Vibrio fischeri)).